The sequence spans 544 residues: Membrane protein insertase YidC (544 aa).

The next 6 helical transmembrane spans lie at 13-33, 321-341, 343-363, 409-429, 461-481, and 506-526; these read LSLFLIGLFMLINDIFSSWML, LWYLIQVPMQMVMQVFYDVIP, WGLSIIFLTIVVRILIFPLTF, LGGCFPIILQLPIFFALYSLV, LYFVSWTDIRILPFIMMFTQL, and MPIMFFFILYNMPSGLLIYWI.

The protein belongs to the OXA1/ALB3/YidC family. Type 1 subfamily. As to quaternary structure, interacts with the Sec translocase complex via SecD. Specifically interacts with transmembrane segments of nascent integral membrane proteins during membrane integration.

The protein resides in the cell inner membrane. Required for the insertion and/or proper folding and/or complex formation of integral membrane proteins into the membrane. Involved in integration of membrane proteins that insert both dependently and independently of the Sec translocase complex, as well as at least some lipoproteins. Aids folding of multispanning membrane proteins. The sequence is that of Membrane protein insertase YidC from Borreliella afzelii (strain PKo) (Borrelia afzelii).